A 328-amino-acid polypeptide reads, in one-letter code: MNGQWYKHLIGARTIKTGIAIFLTAVFCMALDLTPIYAILTAVVTIEPTAKASLIKGYRRLPATVIGAGFAVLFTYLFGDQSPFTYALSATFTILFCTKLKLQVGTNVAVLTSLAMIPGIHDAYIFNFLSRTLTAIIGLVTSGLINFMVFPPKYYGQVEEKLSKTDALMYKLFYNRCQEIILSRLQSDKSEKAYKNIFNLNNQVETLISYQRDELSYHKKKECDWKLLNQLTKRAYTNRLFITHLSNIIYLPKNTRVNFSGDEKMALLKISSSIKDIFYDGSFKREDDSVETLRSTIKALEISGENQIKSHILYEVLMIYRLLDSRYA.

A run of 4 helical transmembrane segments spans residues 19-39 (IAIF…IYAI), 61-81 (LPAT…FGDQ), 108-128 (VAVL…IFNF), and 132-152 (TLTA…VFPP).

It belongs to the UPF0421 family.

It localises to the cell membrane. This is UPF0421 protein SAR1980 from Staphylococcus aureus (strain MRSA252).